A 425-amino-acid chain; its full sequence is L-lysine N6-monooxygenase (425 aa).

Position 8–14 (8–14 (IGVGTGP)) interacts with FAD.

Belongs to the lysine N(6)-hydroxylase/L-ornithine N(5)-oxygenase family. FAD is required as a cofactor.

It is found in the cytoplasm. It localises to the cell membrane. It catalyses the reaction L-lysine + NADPH + O2 = N(6)-hydroxy-L-lysine + NADP(+) + H2O. It participates in siderophore biosynthesis; aerobactin biosynthesis. In terms of biological role, flavoprotein monooxygenase required for N-hydroxylation of lysine. Involved in the biosynthesis of the siderophore aerobactin which is a chelator that mediates the high-affinity iron transport systems induced by the organism under iron-stressed conditions. This Escherichia coli protein is L-lysine N6-monooxygenase.